The primary structure comprises 298 residues: Tyrosine recombinase XerC (298 aa).

The 85-residue stretch at 1–85 folds into the Core-binding (CB) domain; the sequence is MQQQLDAYCA…AVRGLYHYLN (85 aa). In terms of domain architecture, Tyr recombinase spans 106-285; the sequence is RLPKTLDTDR…DFQHLAAVYD (180 aa). Catalysis depends on residues arginine 146, lysine 170, histidine 237, arginine 240, and histidine 263. Tyrosine 272 acts as the O-(3'-phospho-DNA)-tyrosine intermediate in catalysis.

The protein belongs to the 'phage' integrase family. XerC subfamily. In terms of assembly, forms a cyclic heterotetrameric complex composed of two molecules of XerC and two molecules of XerD.

Its subcellular location is the cytoplasm. Site-specific tyrosine recombinase, which acts by catalyzing the cutting and rejoining of the recombining DNA molecules. The XerC-XerD complex is essential to convert dimers of the bacterial chromosome into monomers to permit their segregation at cell division. It also contributes to the segregational stability of plasmids. The polypeptide is Tyrosine recombinase XerC (Pseudomonas fluorescens (strain ATCC BAA-477 / NRRL B-23932 / Pf-5)).